Consider the following 660-residue polypeptide: Methionine--tRNA ligase 1 (660 aa).

Positions 15–25 (YYPSGKLHIGH) match the 'HIGH' region motif. The 'KMSKS' region signature appears at 310 to 314 (KMSKS). An ATP-binding site is contributed by lysine 313. The region spanning 560–660 (DFFKVELRVA…QNLPNGTKIK (101 aa)) is the tRNA-binding domain.

This sequence belongs to the class-I aminoacyl-tRNA synthetase family. MetG type 2B subfamily. As to quaternary structure, homodimer.

It is found in the cytoplasm. The enzyme catalyses tRNA(Met) + L-methionine + ATP = L-methionyl-tRNA(Met) + AMP + diphosphate. Its function is as follows. Is required not only for elongation of protein synthesis but also for the initiation of all mRNA translation through initiator tRNA(fMet) aminoacylation. This chain is Methionine--tRNA ligase 1, found in Bacillus cereus (strain ATCC 14579 / DSM 31 / CCUG 7414 / JCM 2152 / NBRC 15305 / NCIMB 9373 / NCTC 2599 / NRRL B-3711).